Reading from the N-terminus, the 1101-residue chain is Furin-like protease 1, isoform 1-CRR (1101 aa).

Residues 1–57 (MKNDVVRWSRQPTSNTTNSSSSSRSDSNSTHKHRSKSNKLNARQLGSNAARSCQQRS) are disordered. Low complexity predominate over residues 13-28 (TSNTTNSSSSSRSDSN). N15, N18, and N28 each carry an N-linked (GlcNAc...) asparagine glycan. Residues 38–57 (NKLNARQLGSNAARSCQQRS) show a composition bias toward polar residues. A glycan (N-linked (GlcNAc...) asparagine) is linked at N108. A helical membrane pass occupies residues 119 to 139 (VFLLALQFSAVVFLCNINVGF). The segment covering 150 to 163 (SAGGSSPAAPSSAP) has biased composition (low complexity). The tract at residues 150 to 187 (SAGGSSPAAPSSAPSSPPTVAVPPPPPPSSALKVDPNG) is disordered. Residues 164–178 (SSPPTVAVPPPPPPS) are compositionally biased toward pro residues. A glycan (N-linked (GlcNAc...) asparagine) is linked at N333. The region spanning 340 to 654 (MWYLNRGGGL…YGLMDAAEMV (315 aa)) is the Peptidase S8 domain. Catalysis depends on charge relay system residues D372 and H413. Residue N426 is glycosylated (N-linked (GlcNAc...) asparagine). 2 cysteine pairs are disulfide-bonded: C430–C579 and C522–C552. The Charge relay system role is filled by S587. N606 carries an N-linked (GlcNAc...) asparagine glycan. The P/Homo B domain occupies 662–791 (AVPEQQRCEI…DMIFYGTETP (130 aa)). C669 and C695 are disulfide-bonded. 2 N-linked (GlcNAc...) asparagine glycosylation sites follow: N727 and N859. The tract at residues 886-915 (EEDEQDDEVTRGPVNPYSSSPMDHSLLMSN) is disordered. A compositionally biased stretch (polar residues) spans 901-915 (PYSSSPMDHSLLMSN). N-linked (GlcNAc...) asparagine glycosylation is present at N978. The chain crosses the membrane as a helical span at residues 1014-1034 (TVLLLVSVIFTLMGVAVAGGI).

Belongs to the peptidase S8 family. Furin subfamily. Ca(2+) is required as a cofactor. As to expression, in adults, isoform 1-CRR is expressed in CNS, fat body, and female reproductive tissues, and in embryos, in anal pads, hindgut, developing antennomaxillary complex, oenocytes, clipeolabrum, pharynx, trachea, CNS and developing posterior spiracles.

It is found in the golgi apparatus membrane. The catalysed reaction is Release of mature proteins from their proproteins by cleavage of -Arg-Xaa-Yaa-Arg-|-Zaa- bonds, where Xaa can be any amino acid and Yaa is Arg or Lys. Releases albumin, complement component C3 and von Willebrand factor from their respective precursors.. In terms of biological role, furin is likely to represent the ubiquitous endoprotease activity within constitutive secretory pathways and capable of cleavage at the RX(K/R)R consensus motif. This chain is Furin-like protease 1, isoform 1-CRR (Fur1), found in Drosophila melanogaster (Fruit fly).